We begin with the raw amino-acid sequence, 236 residues long: 2-C-methyl-D-erythritol 4-phosphate cytidylyltransferase (236 aa).

This sequence belongs to the IspD/TarI cytidylyltransferase family. IspD subfamily.

The enzyme catalyses 2-C-methyl-D-erythritol 4-phosphate + CTP + H(+) = 4-CDP-2-C-methyl-D-erythritol + diphosphate. The protein operates within isoprenoid biosynthesis; isopentenyl diphosphate biosynthesis via DXP pathway; isopentenyl diphosphate from 1-deoxy-D-xylulose 5-phosphate: step 2/6. In terms of biological role, catalyzes the formation of 4-diphosphocytidyl-2-C-methyl-D-erythritol from CTP and 2-C-methyl-D-erythritol 4-phosphate (MEP). This chain is 2-C-methyl-D-erythritol 4-phosphate cytidylyltransferase, found in Pseudomonas savastanoi pv. phaseolicola (strain 1448A / Race 6) (Pseudomonas syringae pv. phaseolicola (strain 1448A / Race 6)).